The primary structure comprises 31 residues: Delta-conotoxin-like ErVIA (31 aa).

Residues 1–4 constitute a propeptide that is removed on maturation; that stretch reads LNKR. Intrachain disulfides connect Cys5–Cys21, Cys12–Cys25, and Cys20–Cys29.

It belongs to the conotoxin O1 superfamily. As to expression, expressed by the venom duct.

The protein localises to the secreted. Functionally, this toxin activates voltage-gated sodium channels. It shifts the voltage-dependence of activation to more hyperpolarized potentials but has only little effect on channel inactivation. It is active on Nav1.3/SCN3A (EC(50)=3.98 nM), Nav1.4/SCN4A (EC(50)=4.99 nM), Nav1.6/SCN8A (EC(50)=1.27 nM) and Nav1.7/SCN9A (EC(50)=2.42 nM) voltage-gated sodium channels. In vivo, it induces nocifensive or pain-like behaviors in mice when injected intraplantarly. This chain is Delta-conotoxin-like ErVIA, found in Conus eburneus (Ivory cone).